The sequence spans 466 residues: Soluble pyridine nucleotide transhydrogenase (466 aa).

Residue 36–45 participates in FAD binding; it reads ERYNNVGGGC.

Belongs to the class-I pyridine nucleotide-disulfide oxidoreductase family. The cofactor is FAD.

It is found in the cytoplasm. The enzyme catalyses NAD(+) + NADPH = NADH + NADP(+). Conversion of NADPH, generated by peripheral catabolic pathways, to NADH, which can enter the respiratory chain for energy generation. The polypeptide is Soluble pyridine nucleotide transhydrogenase (Yersinia pseudotuberculosis serotype O:1b (strain IP 31758)).